Consider the following 622-residue polypeptide: DNA-directed RNA polymerase subunit gamma (622 aa).

The Zn(2+) site is built by Cys70, Cys72, Cys85, and Cys88. Positions 466, 468, and 470 each coordinate Mg(2+).

The protein belongs to the RNA polymerase beta' chain family. RpoC1 subfamily. As to quaternary structure, in cyanobacteria the RNAP catalytic core is composed of 2 alpha, 1 beta, 1 beta', 1 gamma and 1 omega subunit. When a sigma factor is associated with the core the holoenzyme is formed, which can initiate transcription. Mg(2+) serves as cofactor. Requires Zn(2+) as cofactor.

The enzyme catalyses RNA(n) + a ribonucleoside 5'-triphosphate = RNA(n+1) + diphosphate. DNA-dependent RNA polymerase catalyzes the transcription of DNA into RNA using the four ribonucleoside triphosphates as substrates. The chain is DNA-directed RNA polymerase subunit gamma from Cyanothece sp. (strain PCC 7425 / ATCC 29141).